The sequence spans 505 residues: Lysine--tRNA ligase (505 aa).

The Mg(2+) site is built by E415 and E422.

The protein belongs to the class-II aminoacyl-tRNA synthetase family. In terms of assembly, homodimer. Mg(2+) serves as cofactor.

The protein resides in the cytoplasm. The enzyme catalyses tRNA(Lys) + L-lysine + ATP = L-lysyl-tRNA(Lys) + AMP + diphosphate. This Edwardsiella ictaluri (strain 93-146) protein is Lysine--tRNA ligase.